The chain runs to 107 residues: Cysteine proteinase inhibitor (107 aa).

The Cystatin domain maps to Gly18–Ala107. The short motif at Gln63–Gly67 is the Secondary area of contact element.

This sequence belongs to the cystatin family. Phytocystatin subfamily. As to expression, expressed in embryos, developing endosperms, leaves, roots, flowers and pollen grains.

In terms of biological role, inhibits papain, ficin, cathepsin B and, to a lesser extent, chymopapain, but is inactive against bromelain. Inhibits the growth of pathogenic fungi. Regulated by the DOF transcription factors SAD (activator) and BPBF (repressor). The polypeptide is Cysteine proteinase inhibitor (ICY) (Hordeum vulgare (Barley)).